The following is a 195-amino-acid chain: ATP-dependent Clp protease proteolytic subunit (195 aa).

Ser98 serves as the catalytic Nucleophile. The active site involves His123.

The protein belongs to the peptidase S14 family. As to quaternary structure, fourteen ClpP subunits assemble into 2 heptameric rings which stack back to back to give a disk-like structure with a central cavity, resembling the structure of eukaryotic proteasomes.

The protein resides in the cytoplasm. It catalyses the reaction Hydrolysis of proteins to small peptides in the presence of ATP and magnesium. alpha-casein is the usual test substrate. In the absence of ATP, only oligopeptides shorter than five residues are hydrolyzed (such as succinyl-Leu-Tyr-|-NHMec, and Leu-Tyr-Leu-|-Tyr-Trp, in which cleavage of the -Tyr-|-Leu- and -Tyr-|-Trp bonds also occurs).. Functionally, cleaves peptides in various proteins in a process that requires ATP hydrolysis. Has a chymotrypsin-like activity. Plays a major role in the degradation of misfolded proteins. The protein is ATP-dependent Clp protease proteolytic subunit of Alkaliphilus oremlandii (strain OhILAs) (Clostridium oremlandii (strain OhILAs)).